The primary structure comprises 177 residues: Large ribosomal subunit protein bL17 (177 aa).

The segment at 136–177 is disordered; that stretch reads AEEEAPAVEAEATEAVEAPVEETAAAEAEAPAEEAADAEKAE. Over residues 138–149 the composition is skewed to acidic residues; that stretch reads EEAPAVEAEATE. A compositionally biased stretch (low complexity) spans 150-164; sequence AVEAPVEETAAAEAE.

The protein belongs to the bacterial ribosomal protein bL17 family. Part of the 50S ribosomal subunit. Contacts protein L32.

This Bifidobacterium longum (strain NCC 2705) protein is Large ribosomal subunit protein bL17.